The chain runs to 1064 residues: Lysine-specific demethylase 4A (1064 aa).

Alanine 2 is modified (N-acetylalanine). The JmjN domain occupies 14–56 (IMTFYPTMEEFRNFSRYIAYIESQGAHRAGLAKVVPPKEWKPR). Tyrosine 132 is a 2-oxoglutarate binding site. Residues 142 to 308 (EKHVDEWNIG…YGKQAVLCSC (167 aa)) enclose the JmjC domain. Residues histidine 188 and glutamate 190 each contribute to the Fe cation site. The 2-oxoglutarate site is built by asparagine 198 and lysine 206. Zn(2+) contacts are provided by cysteine 234 and histidine 240. Lysine 241 provides a ligand contact to 2-oxoglutarate. Position 276 (histidine 276) interacts with Fe cation. Positions 306 and 308 each coordinate Zn(2+). The interval 358 to 384 (ELPPRAGNEEECPEEDMEGVEDGEEGD) is disordered. The span at 366 to 382 (EEECPEEDMEGVEDGEE) shows a compositional bias: acidic residues. Lysine 471 participates in a covalent cross-link: (Microbial infection) Glycyl lysine isopeptide (Lys-Gly) (interchain with G-Cter in SUMO). Disordered regions lie at residues 501–537 (FSGSKKKSSSSLGSGSSRDSISSDSETSEPLSCRAQG) and 616–641 (SDDETSEQLTPEEEAEETEAWAKPLS). A compositionally biased stretch (low complexity) spans 509–532 (SSSLGSGSSRDSISSDSETSEPLS). Residue serine 523 is modified to Phosphoserine. The interval 597-638 (RQPLSKLPRHHPLVLQECVSDDETSEQLTPEEEAEETEAWAK) is interaction with NCOR1. Residues 616–634 (SDDETSEQLTPEEEAEETE) are compositionally biased toward acidic residues. The segment at 709–767 (MCFTSTGCSTDINLSTPYLEEDGTSILVSCKKCSVRVHASCYGVPPAKASEDWMCSRCS) adopts a PHD-type 1 zinc-finger fold. Residues 772-805 (EEDCCLCSLRGGALQRANDDRWVHVSCAVAILEA) form a C2HC pre-PHD-type zinc finger. The segment at 828-885 (LKCIFCKKRRKRTAGCCVQCSHGRCPTAFHVSCAQAAGVMMQPDDWPFVVFITCFRHK) adopts a PHD-type 2 zinc-finger fold. Tudor domains lie at 897–954 (QSIT…CLQF) and 955–1011 (GPPA…EELP).

The protein belongs to the JHDM3 histone demethylase family. In terms of assembly, interacts with histone deacetylase proteins HDAC1, HDAC2 and HDAC3. Interacts with RB and NCOR1. Interacts with VRK1. Interacts with FBXO22; this interaction promotes KDM4A ubiquitination. (Microbial infection) Interacts with HTLV-1 Tax protein. Fe(2+) is required as a cofactor. In terms of processing, (Microbial infection) SUMOylated by human herpesvirus 8 E3 SUMO-protein ligase K-bZIP/K8 at Lys-471; thereby modulating the chromatin binding and histone demethylase activity of KDM4A. Post-translationally, ubiquitinated by RNF8 and RNF168 following DNA damage, leading to its degradation. Degradation promotes accessibility of H4K20me2 mark for DNA repair protein TP53BP1, which is then recruited. Also ubiquitinated by the SCF(FBXO22) complex; leading to proteasomal degradation. In terms of tissue distribution, ubiquitous.

It is found in the nucleus. The catalysed reaction is N(6),N(6),N(6)-trimethyl-L-lysyl(9)-[histone H3] + 2 2-oxoglutarate + 2 O2 = N(6)-methyl-L-lysyl(9)-[histone H3] + 2 formaldehyde + 2 succinate + 2 CO2. The enzyme catalyses N(6),N(6),N(6)-trimethyl-L-lysyl(36)-[histone H3] + 2 2-oxoglutarate + 2 O2 = N(6)-methyl-L-lysyl(36)-[histone H3] + 2 formaldehyde + 2 succinate + 2 CO2. Several specific inhibitors are being developed and tested. Functionally, histone demethylase that specifically demethylates 'Lys-9' and 'Lys-36' residues of histone H3, thereby playing a central role in histone code. Does not demethylate histone H3 'Lys-4', H3 'Lys-27' nor H4 'Lys-20'. Demethylates trimethylated H3 'Lys-9' and H3 'Lys-36' residue, while it has no activity on mono- and dimethylated residues. Demethylation of Lys residue generates formaldehyde and succinate. Participates in transcriptional repression of ASCL2 and E2F-responsive promoters via the recruitment of histone deacetylases and NCOR1, respectively. Its function is as follows. Crucial for muscle differentiation, promotes transcriptional activation of the Myog gene by directing the removal of repressive chromatin marks at its promoter. Lacks the N-terminal demethylase domain. The chain is Lysine-specific demethylase 4A (KDM4A) from Homo sapiens (Human).